A 215-amino-acid polypeptide reads, in one-letter code: Large ribosomal subunit protein uL3 (215 aa).

N5-methylglutamine is present on Q156.

The protein belongs to the universal ribosomal protein uL3 family. In terms of assembly, part of the 50S ribosomal subunit. Forms a cluster with proteins L14 and L19. Post-translationally, methylated by PrmB.

One of the primary rRNA binding proteins, it binds directly near the 3'-end of the 23S rRNA, where it nucleates assembly of the 50S subunit. This chain is Large ribosomal subunit protein uL3, found in Xylella fastidiosa (strain M23).